Reading from the N-terminus, the 546-residue chain is Membrane protein insertase YidC (546 aa).

Residues 6–26 (LILFIVFSFSLLLLWEAWQDK) form a helical membrane-spanning segment. The interval 31 to 56 (PATRPVAGAPAGSAAPTPSTALNAPA) is disordered. Positions 37 to 56 (AGAPAGSAAPTPSTALNAPA) are enriched in low complexity. 4 helical membrane passes run 351 to 371 (LVGNWGWAIIILTILIKLALY), 425 to 445 (LPILIQIPVFIALYWVLLAAV), 465 to 482 (WYILPIIMGVTSILQVKL), and 494 to 514 (IMMIMPVAFTVMFVFFPAGLV).

This sequence belongs to the OXA1/ALB3/YidC family. Type 1 subfamily. Interacts with the Sec translocase complex via SecD. Specifically interacts with transmembrane segments of nascent integral membrane proteins during membrane integration.

It localises to the cell inner membrane. Its function is as follows. Required for the insertion and/or proper folding and/or complex formation of integral membrane proteins into the membrane. Involved in integration of membrane proteins that insert both dependently and independently of the Sec translocase complex, as well as at least some lipoproteins. Aids folding of multispanning membrane proteins. In Thiobacillus denitrificans (strain ATCC 25259 / T1), this protein is Membrane protein insertase YidC.